A 76-amino-acid chain; its full sequence is Putative antitoxin VapB2 (76 aa).

The protein belongs to the UPF0330 family.

Functionally, possibly the antitoxin component of a type II toxin-antitoxin (TA) system. Its cognate toxin is VapC2 (Potential). The sequence is that of Putative antitoxin VapB2 (vapB2) from Pyrococcus abyssi (strain GE5 / Orsay).